We begin with the raw amino-acid sequence, 57 residues long: uncharacterized protein (57 aa).

The tract at residues 1–57 (MANHRGGSGNFAEDRERASEAGKKGGQHSGGNFKNDPQRASEAGKKGGKSSHGKSDN) is disordered. Composition is skewed to basic and acidic residues over residues 12–23 (AEDRERASEAGK) and 36–45 (DPQRASEAGK). Residues 46-57 (KGGKSSHGKSDN) are compositionally biased toward basic residues.

This sequence belongs to the con-10 family.

This is an uncharacterized protein from Escherichia coli (strain K12).